The following is a 473-amino-acid chain: Keratin, type I cuticular Ha6 (473 aa).

Residues 1 to 93 (MATQICTPTF…FCEGAFNGNE (93 aa)) form a head region. Residues 93–404 (EKATMQILND…RLLDGEDCKL (312 aa)) enclose the IF rod domain. Residues 94-128 (KATMQILNDRLANYLEKVRQLEQENTQLECRIREW) form a coil 1A region. Residues 129–139 (YECQIPYICPD) are linker 1. Residues 140–240 (YQSYFKTAEE…HEEEVNALRS (101 aa)) form a coil 1B region. The tract at residues 241 to 256 (QLGDRLNVEVDAAPPV) is linker 12. Positions 257-400 (DLNKILDDMR…ATYRRLLDGE (144 aa)) are coil 2. Residues 401–473 (DCKLPAHPCS…SREHVVPRAM (73 aa)) are tail.

This sequence belongs to the intermediate filament family. As to quaternary structure, heterotetramer of two type I and two type II keratins. In terms of tissue distribution, in skin, only expressed in the suprabasal cells of tail scale epidermis. Suprabasally expressed in stratified squamous epithelia and also in the posterior unit of the complex filiform papillae of tongue. Expressed in rare anatomical sites in which an orthokeratinized stratum corneum would be too soft and a hard keratinized structure would be too rigid to meet the functional requirement of the respective epithelia.

This Mus musculus (Mouse) protein is Keratin, type I cuticular Ha6.